Consider the following 151-residue polypeptide: Large ribosomal subunit protein bL9 (151 aa).

Belongs to the bacterial ribosomal protein bL9 family.

In terms of biological role, binds to the 23S rRNA. The sequence is that of Large ribosomal subunit protein bL9 from Rhodococcus erythropolis (strain PR4 / NBRC 100887).